Reading from the N-terminus, the 538-residue chain is Nectin-2 (538 aa).

Positions 1 to 31 (MARAAALLPSRSPPTPLLWPLLLLLLLETGA) are cleaved as a signal peptide. Residues 32–156 (QDVRVQVLPE…KGSVRGMTWL (125 aa)) form the Ig-like V-type domain. Residues 32–360 (QDVRVQVLPE…NTAGAGATGG (329 aa)) lie on the Extracellular side of the membrane. 3 disulfide bridges follow: Cys-54/Cys-140, Cys-183/Cys-238, and Cys-283/Cys-329. Asn-137 carries an N-linked (GlcNAc...) asparagine glycan. Ig-like C2-type domains follow at residues 162 to 256 (PKNQ…VTLS) and 261 to 345 (PEVS…QVIF). A glycan (N-linked (GlcNAc...) asparagine) is linked at Asn-324. Residues 361-381 (IIGGIIAAIIATAVAATGILI) traverse the membrane as a helical segment. At 382–538 (CRQQRKEQTL…GFVMSRAMYV (157 aa)) the chain is on the cytoplasmic side. The segment at 390 to 414 (TLQGAEEDEDLEGPPSYKPPTPKAK) is disordered. Thr-410 carries the phosphothreonine modification. Phosphoserine is present on residues Ser-433, Gly-465, and Gly-470. The segment at 462–489 (ERSGPLHPGATSLGSPIPVPPGPPAVED) is disordered.

It belongs to the nectin family. In terms of assembly, can form trans-heterodimers with NECTIN3. Interacts with CD226 or with PVRIG; these interactions are competitive and have a differential functional outcome on T-cell activation, either positive or negative, respectively. Binds with low affinity to TIGIT. As to quaternary structure, (Microbial infection) Interacts with herpes simplex virus 1 (HHV-1) mutant Rid1, herpes simplex virus 1 (HHV-2) and pseudorabies virus (PRV) envelope glycoprotein D. Ubiquitous.

The protein resides in the cell membrane. Modulator of T-cell signaling. Can be either a costimulator of T-cell function, or a coinhibitor, depending on the receptor it binds to. Upon binding to CD226, stimulates T-cell proliferation and cytokine production, including that of IL2, IL5, IL10, IL13, and IFNG. Upon interaction with PVRIG, inhibits T-cell proliferation. These interactions are competitive. Probable cell adhesion protein. Functionally, (Microbial infection) Acts as a receptor for herpes simplex virus 1 (HHV-1) mutant Rid1, herpes simplex virus 1 (HHV-2) and pseudorabies virus (PRV). In Homo sapiens (Human), this protein is Nectin-2.